The following is a 120-amino-acid chain: Small ribosomal subunit protein uS13 (120 aa).

Residues 93-120 form a disordered region; that stretch reads RRGLPCRGQKTKTNARTRKGKRKTVGAA.

Belongs to the universal ribosomal protein uS13 family. In terms of assembly, part of the 30S ribosomal subunit. Forms a loose heterodimer with protein S19. Forms two bridges to the 50S subunit in the 70S ribosome.

Located at the top of the head of the 30S subunit, it contacts several helices of the 16S rRNA. In the 70S ribosome it contacts the 23S rRNA (bridge B1a) and protein L5 of the 50S subunit (bridge B1b), connecting the 2 subunits; these bridges are implicated in subunit movement. Contacts the tRNAs in the A and P-sites. The polypeptide is Small ribosomal subunit protein uS13 (Sulfurimonas denitrificans (strain ATCC 33889 / DSM 1251) (Thiomicrospira denitrificans (strain ATCC 33889 / DSM 1251))).